Consider the following 357-residue polypeptide: DNA integrity scanning protein DisA (357 aa).

Residues 8-146 (VKSIINILQL…GNLRYTLKDI (139 aa)) form the DAC domain. ATP is bound by residues glycine 75, leucine 93, and 106 to 110 (MRHRT).

It belongs to the DisA family. As to quaternary structure, homooctamer. The cofactor is Mg(2+).

The enzyme catalyses 2 ATP = 3',3'-c-di-AMP + 2 diphosphate. Its function is as follows. Participates in a DNA-damage check-point that is active prior to asymmetric division when DNA is damaged. DisA forms globular foci that rapidly scan along the chromosomes during sporulation, searching for lesions. When a lesion is present, DisA pauses at the lesion site. This triggers a cellular response that culminates in a temporary block in sporulation initiation. In terms of biological role, also has diadenylate cyclase activity, catalyzing the condensation of 2 ATP molecules into cyclic di-AMP (c-di-AMP). c-di-AMP acts as a signaling molecule that couples DNA integrity with progression of sporulation. The rise in c-di-AMP level generated by DisA while scanning the chromosome, operates as a positive signal that advances sporulation; upon encountering a lesion, the DisA focus arrests at the damaged site and halts c-di-AMP synthesis. The sequence is that of DNA integrity scanning protein DisA from Bacillus cereus (strain B4264).